Reading from the N-terminus, the 544-residue chain is Cannabidiolic acid synthase (544 aa).

Residues 1–28 (MKCSTFSFWFVCKIIFFFFSFNIQTSIA) form the signal peptide. Cysteines 37 and 99 form a disulfide. 2 N-linked (GlcNAc...) asparagine glycosylation sites follow: Asn45 and Asn65. Residues 77-251 (TTPKPLVIVT…VAWKIRLVAV (175 aa)) enclose the FAD-binding PCMH-type domain. Residues 109 to 115 (TRSGGHD) and Ser120 each bind FAD. Positions 114 to 176 (HDSEGMSYIS…ENLSLAAGYC (63 aa)) form a cross-link, 6-(S-cysteinyl)-8alpha-(pros-histidyl)-FAD (His-Cys). A glycan (N-linked (GlcNAc...) asparagine) is linked at Asn168. FAD contacts are provided by residues Cys176, 180-184 (CAGGH), Tyr190, Glu236, and Ile241. Cannabigerolate is bound at residue His291. N-linked (GlcNAc...) asparagine glycans are attached at residues Asn296, Asn304, and Asn328. Positions 416 and 441 each coordinate cannabigerolate. 480–482 (YLN) contributes to the FAD binding site. Residue Tyr483 is the Proton acceptor of the active site. Asn498 carries N-linked (GlcNAc...) asparagine glycosylation.

The protein belongs to the oxygen-dependent FAD-linked oxidoreductase family. In terms of assembly, monomer. FAD serves as cofactor. Glycosylated. Post-translationally, the FAD cofactor is bound via a bicovalent 6-S-cysteinyl, 8alpha-N1-histidyl FAD linkage. Expressed in young leaves.

The protein localises to the secreted. Its subcellular location is the extracellular space. It localises to the apoplast. The enzyme catalyses cannabigerolate + O2 = cannabidiolate + H2O2. It functions in the pathway secondary metabolite biosynthesis; terpenoid biosynthesis. Inhibited by Hg(2+). Functionally, oxidoreductase involved in the biosynthesis of cannabinoids-related terpenophenolic natural products, which have pharmacological activity. Catalyzes the stereoselective oxidative cyclization of the monoterpene moiety in cannabigerolic acid (CBGA), producing cannabidiolate (CBDA), the major cannabioid in fiber-type Cannabis plants. Can also use cannabinerolic acid as substrate, but not cannabigerol or cannabinerol. This Cannabis sativa (Hemp) protein is Cannabidiolic acid synthase.